We begin with the raw amino-acid sequence, 354 residues long: Peptide chain release factor 1 (354 aa).

Gln-231 is subject to N5-methylglutamine. Residues 284–304 are compositionally biased toward basic and acidic residues; it reads EALAKDRKEQVGSGDRSERIR. The segment at 284–308 is disordered; the sequence is EALAKDRKEQVGSGDRSERIRTYNF.

Belongs to the prokaryotic/mitochondrial release factor family. In terms of processing, methylated by PrmC. Methylation increases the termination efficiency of RF1.

Its subcellular location is the cytoplasm. In terms of biological role, peptide chain release factor 1 directs the termination of translation in response to the peptide chain termination codons UAG and UAA. The polypeptide is Peptide chain release factor 1 (Nitratiruptor sp. (strain SB155-2)).